Consider the following 125-residue polypeptide: Small ribosomal subunit protein uS13 (125 aa).

Belongs to the universal ribosomal protein uS13 family. As to quaternary structure, part of the 30S ribosomal subunit. Forms a loose heterodimer with protein S19. Forms two bridges to the 50S subunit in the 70S ribosome.

Functionally, located at the top of the head of the 30S subunit, it contacts several helices of the 16S rRNA. In the 70S ribosome it contacts the 23S rRNA (bridge B1a) and protein L5 of the 50S subunit (bridge B1b), connecting the 2 subunits; these bridges are implicated in subunit movement. Contacts the tRNAs in the A and P-sites. The protein is Small ribosomal subunit protein uS13 of Gluconobacter oxydans (strain 621H) (Gluconobacter suboxydans).